Consider the following 70-residue polypeptide: MFTLKKSLLLLFFLGTINLSLCEQERDADEEERRDDDEMDVEVEKRFLPLVASLAANFLPKLFCKITKKC.

The first 22 residues, 1-22, serve as a signal peptide directing secretion; that stretch reads MFTLKKSLLLLFFLGTINLSLC. Residues 23 to 44 constitute a propeptide that is removed on maturation; sequence EQERDADEEERRDDDEMDVEVE. Cys64 and Cys70 form a disulfide bridge.

Belongs to the frog skin active peptide (FSAP) family. Brevinin subfamily. Expressed by the skin glands.

The protein localises to the secreted. Its function is as follows. Antimicrobial peptide with activity against a variety of Gram-negative and Gram-positive bacteria and against fungi. Shows strong hemolytic activity against human erythrocytes. The sequence is that of Brevinin-1MT1 from Amolops mantzorum (Sichuan torrent frog).